A 333-amino-acid polypeptide reads, in one-letter code: Tetraacyldisaccharide 4'-kinase (333 aa).

Thr-60–Thr-67 serves as a coordination point for ATP.

It belongs to the LpxK family.

It carries out the reaction a lipid A disaccharide + ATP = a lipid IVA + ADP + H(+). The protein operates within glycolipid biosynthesis; lipid IV(A) biosynthesis; lipid IV(A) from (3R)-3-hydroxytetradecanoyl-[acyl-carrier-protein] and UDP-N-acetyl-alpha-D-glucosamine: step 6/6. Functionally, transfers the gamma-phosphate of ATP to the 4'-position of a tetraacyldisaccharide 1-phosphate intermediate (termed DS-1-P) to form tetraacyldisaccharide 1,4'-bis-phosphate (lipid IVA). In Azotobacter vinelandii (strain DJ / ATCC BAA-1303), this protein is Tetraacyldisaccharide 4'-kinase.